Reading from the N-terminus, the 953-residue chain is Glycine dehydrogenase (decarboxylating) (953 aa).

K705 is subject to N6-(pyridoxal phosphate)lysine.

It belongs to the GcvP family. In terms of assembly, the glycine cleavage system is composed of four proteins: P, T, L and H. Pyridoxal 5'-phosphate is required as a cofactor.

It catalyses the reaction N(6)-[(R)-lipoyl]-L-lysyl-[glycine-cleavage complex H protein] + glycine + H(+) = N(6)-[(R)-S(8)-aminomethyldihydrolipoyl]-L-lysyl-[glycine-cleavage complex H protein] + CO2. The glycine cleavage system catalyzes the degradation of glycine. The P protein binds the alpha-amino group of glycine through its pyridoxal phosphate cofactor; CO(2) is released and the remaining methylamine moiety is then transferred to the lipoamide cofactor of the H protein. This chain is Glycine dehydrogenase (decarboxylating), found in Sodalis glossinidius (strain morsitans).